A 383-amino-acid polypeptide reads, in one-letter code: Adaptive-response sensory kinase SasA (383 aa).

The Histidine kinase domain occupies 152-365 (MVAHELRTPL…CFTFTVPIWQ (214 aa)). Residue H155 is modified to Phosphohistidine; by autocatalysis.

In terms of assembly, homooligomerizes. Interacts with KaiC. Participates in the KaiABC clock complex, whose core is composed of a KaiC homohexamer, 6 KaiB and up to 6 KaiA dimers. SasA and KaiB(fs) compete to bind to KaiC.

It carries out the reaction ATP + protein L-histidine = ADP + protein N-phospho-L-histidine.. In terms of biological role, member of the two-component regulatory system SasA/RpaA involved in genome-wide circadian gene expression. One of several clock output pathways. Participates in the Kai clock protein complex, the main circadian regulator in cyanobacteria, via its interaction with KaiC. KaiC enhances the autophosphorylation activity of SasA, which then transfers its phosphate group to RpaA to activate it. In addition to its output function, recruits fold-shifted KaiB (KaiB(fs)) to KaiC to cooperatively form the KaiB(6):KaiC(6) complex (independent of SasA kinase activity). Required for robustness of the circadian rhythm of gene expression and is involved in clock output, also required for adaptation to light/dark cycles. This chain is Adaptive-response sensory kinase SasA, found in Synechococcus sp. (strain CC9902).